Here is a 217-residue protein sequence, read N- to C-terminus: Peptide methionine sulfoxide reductase MsrA 1 (217 aa).

Residue Cys57 is part of the active site.

Belongs to the MsrA Met sulfoxide reductase family.

The enzyme catalyses L-methionyl-[protein] + [thioredoxin]-disulfide + H2O = L-methionyl-(S)-S-oxide-[protein] + [thioredoxin]-dithiol. It carries out the reaction [thioredoxin]-disulfide + L-methionine + H2O = L-methionine (S)-S-oxide + [thioredoxin]-dithiol. Its function is as follows. Has an important function as a repair enzyme for proteins that have been inactivated by oxidation. Catalyzes the reversible oxidation-reduction of methionine sulfoxide in proteins to methionine. In Rhizobium meliloti (strain 1021) (Ensifer meliloti), this protein is Peptide methionine sulfoxide reductase MsrA 1 (msrA1).